An 88-amino-acid chain; its full sequence is Small ribosomal subunit protein uS15 (88 aa).

The protein belongs to the universal ribosomal protein uS15 family. Part of the 30S ribosomal subunit. Forms a bridge to the 50S subunit in the 70S ribosome, contacting the 23S rRNA.

In terms of biological role, one of the primary rRNA binding proteins, it binds directly to 16S rRNA where it helps nucleate assembly of the platform of the 30S subunit by binding and bridging several RNA helices of the 16S rRNA. Its function is as follows. Forms an intersubunit bridge (bridge B4) with the 23S rRNA of the 50S subunit in the ribosome. The protein is Small ribosomal subunit protein uS15 of Sorangium cellulosum (strain So ce56) (Polyangium cellulosum (strain So ce56)).